We begin with the raw amino-acid sequence, 500 residues long: Probable cytosol aminopeptidase (500 aa).

2 residues coordinate Mn(2+): lysine 265 and aspartate 270. Residue lysine 277 is part of the active site. Residues aspartate 288, aspartate 347, and glutamate 349 each contribute to the Mn(2+) site. Residue arginine 351 is part of the active site.

It belongs to the peptidase M17 family. Mn(2+) is required as a cofactor.

Its subcellular location is the cytoplasm. The catalysed reaction is Release of an N-terminal amino acid, Xaa-|-Yaa-, in which Xaa is preferably Leu, but may be other amino acids including Pro although not Arg or Lys, and Yaa may be Pro. Amino acid amides and methyl esters are also readily hydrolyzed, but rates on arylamides are exceedingly low.. It catalyses the reaction Release of an N-terminal amino acid, preferentially leucine, but not glutamic or aspartic acids.. Functionally, presumably involved in the processing and regular turnover of intracellular proteins. Catalyzes the removal of unsubstituted N-terminal amino acids from various peptides. This Rickettsia massiliae (strain Mtu5) protein is Probable cytosol aminopeptidase.